The following is a 157-amino-acid chain: Protein Smg homolog (157 aa).

This sequence belongs to the Smg family.

The polypeptide is Protein Smg homolog (Alkalilimnicola ehrlichii (strain ATCC BAA-1101 / DSM 17681 / MLHE-1)).